We begin with the raw amino-acid sequence, 305 residues long: Olfactory receptor 9G1 (305 aa).

The Extracellular segment spans residues 1–24; sequence MQRSNHTVTEFILLGFTTDPGMQL. N-linked (GlcNAc...) asparagine glycosylation is present at Asn-5. Residues 25-45 form a helical membrane-spanning segment; it reads GLFVVFLGVYSLTVVGNSTLI. The Cytoplasmic portion of the chain corresponds to 46–53; that stretch reads VLICNDSC. A helical membrane pass occupies residues 54–74; it reads LHTPMYFFTGNLSFLDLWYSS. At 75–98 the chain is on the extracellular side; it reads VYTPKILVTCISEDKSISFAGCLC. An intrachain disulfide couples Cys-96 to Cys-188. Residues 99–119 form a helical membrane-spanning segment; that stretch reads QFFFSAGLAYSECYLLAAVAY. The Cytoplasmic portion of the chain corresponds to 120–138; the sequence is DRYVAISKPLLYAQAMSIK. A helical membrane pass occupies residues 139-159; the sequence is LCALLVAVSYCGGFINSSIIT. Residues 160–196 are Extracellular-facing; that stretch reads KKTFSFNFCRENIIDDFFCDLLPLVELACGEKGGYKI. The helical transmembrane segment at 197 to 216 threads the bilayer; that stretch reads MMYFLLASNVICPAVLILAS. At 217-236 the chain is on the cytoplasmic side; the sequence is YLFIITSVLRISSSKGYLKA. Residues 237 to 257 traverse the membrane as a helical segment; it reads FSTCSSHLTSVTLYYGSILYI. The Extracellular portion of the chain corresponds to 258 to 270; that stretch reads YALPRSSYSFDMD. Residues 271–291 traverse the membrane as a helical segment; the sequence is KIVSTFYTVVFPMLNLMIYSL. At 292 to 305 the chain is on the cytoplasmic side; sequence RNKDVKEALKKLLP.

The protein belongs to the G-protein coupled receptor 1 family.

The protein resides in the cell membrane. Functionally, odorant receptor. This Homo sapiens (Human) protein is Olfactory receptor 9G1 (OR9G1).